The chain runs to 167 residues: Large ribosomal subunit protein uL23 (167 aa).

The interval 1–130 (MNVNEIIKGP…ELEAKNKEIA (130 aa)) is large ribosomal subunit protein uL23. Disordered regions lie at residues 91-112 (FEDESPQDQKDSETISENTDEK) and 137-167 (QAELAKKESETNENQEKKIENQTENQENSAK). 2 stretches are compositionally biased toward basic and acidic residues: residues 97-112 (QDQKDSETISENTDEK) and 137-157 (QAELAKKESETNENQEKKIEN). A unknown region spans residues 131–167 (EKLAKKQAELAKKESETNENQEKKIENQTENQENSAK). Residues 158–167 (QTENQENSAK) show a composition bias toward polar residues.

Belongs to the universal ribosomal protein uL23 family. Part of the 50S ribosomal subunit. Contacts protein L29, and trigger factor when it is bound to the ribosome.

One of the early assembly proteins it binds 23S rRNA. One of the proteins that surrounds the polypeptide exit tunnel on the outside of the ribosome. Forms the main docking site for trigger factor binding to the ribosome. This is Large ribosomal subunit protein uL23 from Mesomycoplasma hyopneumoniae (strain 7448) (Mycoplasma hyopneumoniae).